The primary structure comprises 529 residues: uncharacterized protein (529 aa).

Residues 1–11 (MSSSKIKELRE) show a composition bias toward basic and acidic residues. Disordered regions lie at residues 1–222 (MSSS…IPYS), 237–256 (PFLE…EENV), 271–372 (AFLQ…TAAP), and 393–488 (GSGN…PSFT). Residues 27-40 (MQQNQPRPATTTPP) are compositionally biased toward polar residues. Residues 83 to 95 (TKGRAHPRSRRPP) are compositionally biased toward basic residues. A compositionally biased stretch (polar residues) spans 110–125 (NTGSTKAADTKSSVEA). Ser128 carries the post-translational modification Phosphoserine. A compositionally biased stretch (polar residues) spans 170–199 (TTKAVEATTSKASSAHTDTLATSASNSDRG). Ser217 is subject to Phosphoserine. The segment covering 237–249 (PFLESKVLPQNNE) has biased composition (polar residues). Residues 321-334 (SSPLSFSASKSPAA) show a composition bias toward low complexity. Polar residues predominate over residues 336 to 362 (DSSTKTPTEQVNVVSKQAPTTSSTSVI). A compositionally biased stretch (basic and acidic residues) spans 409–426 (ERTKSLSKESPVEPEKPA). A compositionally biased stretch (polar residues) spans 430-455 (ATSSSTPTTENKESWTNQGIKSSQQR). The segment covering 456–470 (SANASPATSPSNQAS) has biased composition (low complexity). Polar residues predominate over residues 471 to 488 (IHASFTKESSTHSSPSFT).

It localises to the cytoplasm. This is an uncharacterized protein from Schizosaccharomyces pombe (strain 972 / ATCC 24843) (Fission yeast).